Reading from the N-terminus, the 936-residue chain is Periplasmic nitrate reductase (936 aa).

The segment at residues 1–31 (MALSRRDFLKSSAAAAAASAVGLSVPKEVEA) is a signal peptide (tat-type signal). Residues 40 to 96 (WRWDKAVCRFCGTGCGIMIATKDDRIVAVKGDPLAPVNRGLNCIKGYFTAKIMYGAD) enclose the 4Fe-4S Mo/W bis-MGD-type domain. [4Fe-4S] cluster-binding residues include Cys47, Cys50, Cys54, and Cys82. Mo-bis(molybdopterin guanine dinucleotide) is bound by residues Lys84, Gln152, Asn177, Cys181, 214 to 221 (WGSNMAEM), 246 to 250 (STYTH), Met424, Gln428, Asn534, 559 to 560 (SD), Lys582, Asp609, and 826 to 835 (TGRVLEHWHS). Residue Trp902 participates in substrate binding. Residues Asn910 and Lys927 each coordinate Mo-bis(molybdopterin guanine dinucleotide).

It belongs to the prokaryotic molybdopterin-containing oxidoreductase family. NasA/NapA/NarB subfamily. Component of the periplasmic nitrate reductase NapAB complex composed of NapA and NapB. [4Fe-4S] cluster is required as a cofactor. Mo-bis(molybdopterin guanine dinucleotide) serves as cofactor. In terms of processing, predicted to be exported by the Tat system. The position of the signal peptide cleavage has not been experimentally proven.

It is found in the periplasm. The catalysed reaction is 2 Fe(II)-[cytochrome] + nitrate + 2 H(+) = 2 Fe(III)-[cytochrome] + nitrite + H2O. Functionally, catalytic subunit of the periplasmic nitrate reductase complex NapAB. Receives electrons from NapB and catalyzes the reduction of nitrate to nitrite. This chain is Periplasmic nitrate reductase, found in Nitratiruptor sp. (strain SB155-2).